Here is a 195-residue protein sequence, read N- to C-terminus: Imidazoleglycerol-phosphate dehydratase (195 aa).

Belongs to the imidazoleglycerol-phosphate dehydratase family.

The protein localises to the cytoplasm. It carries out the reaction D-erythro-1-(imidazol-4-yl)glycerol 3-phosphate = 3-(imidazol-4-yl)-2-oxopropyl phosphate + H2O. It participates in amino-acid biosynthesis; L-histidine biosynthesis; L-histidine from 5-phospho-alpha-D-ribose 1-diphosphate: step 6/9. This Cereibacter sphaeroides (strain ATCC 17029 / ATH 2.4.9) (Rhodobacter sphaeroides) protein is Imidazoleglycerol-phosphate dehydratase.